We begin with the raw amino-acid sequence, 513 residues long: ATP synthase subunit alpha (513 aa).

An ATP-binding site is contributed by 169 to 176 (GDRQTGKT).

This sequence belongs to the ATPase alpha/beta chains family. In terms of assembly, F-type ATPases have 2 components, CF(1) - the catalytic core - and CF(0) - the membrane proton channel. CF(1) has five subunits: alpha(3), beta(3), gamma(1), delta(1), epsilon(1). CF(0) has three main subunits: a(1), b(2) and c(9-12). The alpha and beta chains form an alternating ring which encloses part of the gamma chain. CF(1) is attached to CF(0) by a central stalk formed by the gamma and epsilon chains, while a peripheral stalk is formed by the delta and b chains.

The protein localises to the cell inner membrane. It catalyses the reaction ATP + H2O + 4 H(+)(in) = ADP + phosphate + 5 H(+)(out). In terms of biological role, produces ATP from ADP in the presence of a proton gradient across the membrane. The alpha chain is a regulatory subunit. The polypeptide is ATP synthase subunit alpha (Vesicomyosocius okutanii subsp. Calyptogena okutanii (strain HA)).